We begin with the raw amino-acid sequence, 106 residues long: Large ribosomal subunit protein bL21 (106 aa).

This sequence belongs to the bacterial ribosomal protein bL21 family. As to quaternary structure, part of the 50S ribosomal subunit. Contacts protein L20.

In terms of biological role, this protein binds to 23S rRNA in the presence of protein L20. This Fervidobacterium nodosum (strain ATCC 35602 / DSM 5306 / Rt17-B1) protein is Large ribosomal subunit protein bL21.